The sequence spans 437 residues: Probable E3 ubiquitin-protein ligase TRIML2 (437 aa).

A B box-type zinc finger spans residues 14–55; sequence TEDAYCETHLEPTRLFCDVDQITLCSKCFQSQEHKHHMVCGI. Zn(2+) contacts are provided by Cys19, His22, Cys41, and His47. The stretch at 55-200 forms a coiled coil; it reads IQEAAENYRK…IVELEKKCGE (146 aa). The B30.2/SPRY domain occupies 231–429; the sequence is DLSLCHIRGL…DSLTILQHGP (199 aa).

The catalysed reaction is S-ubiquitinyl-[E2 ubiquitin-conjugating enzyme]-L-cysteine + [acceptor protein]-L-lysine = [E2 ubiquitin-conjugating enzyme]-L-cysteine + N(6)-ubiquitinyl-[acceptor protein]-L-lysine.. It participates in protein modification; protein ubiquitination. In Homo sapiens (Human), this protein is Probable E3 ubiquitin-protein ligase TRIML2.